A 271-amino-acid polypeptide reads, in one-letter code: MTPLSSADTLTLHGQTFASRVLLGTSRYPSLQSLSDSIAAARPGMVTVALRRQMNAGAAEAGFFELLKRHDVPLLPNTAGCQTIAEAVTTAQMAREVFETDWIKLELIGDDYTLQPDPVGLIEAATLLVKDGFKVLPYCTEDLVIARRLLDAGCEALMPWGAPIGTGKGIVNPYGLRVLRERLPDVPLIVDAGLGVPSHACQVMEWGFDGVLLNTAVSQATHPEIMARAFARGVEAGRAAYLAGPMDARESAHASTPVVGMPFWHQDGSHA.

K104 functions as the Schiff-base intermediate with DXP in the catalytic mechanism. Residues G165, 192–193 (AG), and 214–215 (NT) each bind 1-deoxy-D-xylulose 5-phosphate.

Belongs to the ThiG family. In terms of assembly, homotetramer. Forms heterodimers with either ThiH or ThiS.

It is found in the cytoplasm. It carries out the reaction [ThiS sulfur-carrier protein]-C-terminal-Gly-aminoethanethioate + 2-iminoacetate + 1-deoxy-D-xylulose 5-phosphate = [ThiS sulfur-carrier protein]-C-terminal Gly-Gly + 2-[(2R,5Z)-2-carboxy-4-methylthiazol-5(2H)-ylidene]ethyl phosphate + 2 H2O + H(+). It functions in the pathway cofactor biosynthesis; thiamine diphosphate biosynthesis. Functionally, catalyzes the rearrangement of 1-deoxy-D-xylulose 5-phosphate (DXP) to produce the thiazole phosphate moiety of thiamine. Sulfur is provided by the thiocarboxylate moiety of the carrier protein ThiS. In vitro, sulfur can be provided by H(2)S. This Burkholderia mallei (strain ATCC 23344) protein is Thiazole synthase.